A 407-amino-acid chain; its full sequence is MSDPVGGLKYLTTSPGIGGKIKVYPEDFIVKEVIPKSIFKAGKCKIYILKKKNWETMAAIKEIAKRVGVHYSEIGFAGTKDRHAVTYQYISICRDVNLEEVKIRDIELKFVGYGRPLKLGFLLGNFFKIRVRESNPSLLPSVIEEAKEKGGFPNYFGIQRFGEKRSVNHVVGKLLLLGKYEEAAEVFLGFPGKGMEGDEARRKFLETKDVDLALREFPNFLRYERAMLYRYKETGSWKKAFLVLPRPILRIFIHSFQSYLFNLYLSRRIEEGLPLNKALPGDIVIQVKKGIPLRKRTYRVTENNVDFVNRKIKEGEAMVSGPIFGYMYRKGKGIPGRLEEEILEEAGVKLEYFKKLPKPMREPGGRRELLIRPMKFAYKVEDRDVIFRFFLPKGVYATSVLREIMKN.

Asp-81 serves as the catalytic Nucleophile. Residues 151-372 enclose the TRUD domain; the sequence is GFPNYFGIQR…PGGRRELLIR (222 aa).

Belongs to the pseudouridine synthase TruD family.

The enzyme catalyses uridine(13) in tRNA = pseudouridine(13) in tRNA. In terms of biological role, could be responsible for synthesis of pseudouridine from uracil-13 in transfer RNAs. The polypeptide is Probable tRNA pseudouridine synthase D (Pyrococcus furiosus (strain ATCC 43587 / DSM 3638 / JCM 8422 / Vc1)).